The following is a 418-amino-acid chain: Acyl-[acyl-carrier-protein] desaturase 4, chloroplastic (418 aa).

The N-terminal 70 residues, 1-70, are a transit peptide targeting the chloroplast; it reads MASSGLAVAA…ATAAAPADTA (70 aa). Glutamate 152, glutamate 190, histidine 193, glutamate 243, glutamate 276, and histidine 279 together coordinate Fe cation.

The protein belongs to the fatty acid desaturase type 2 family. In terms of assembly, homodimer. Requires Fe(2+) as cofactor.

It localises to the plastid. Its subcellular location is the chloroplast. Its pathway is lipid metabolism; fatty acid metabolism. Functionally, introduces a cis double bond in the acyl chain of an acyl-[acyl-carrier protein]. The polypeptide is Acyl-[acyl-carrier-protein] desaturase 4, chloroplastic (Oryza sativa subsp. japonica (Rice)).